The following is a 348-amino-acid chain: Arginine kinase Oct f 2 (348 aa).

Residues 1 to 83 (MAEELFKTLQ…LDAVIMDYHK (83 aa)) form the Phosphagen kinase N-terminal domain. 56-60 (GVGIY) provides a ligand contact to substrate. Positions 111-347 (MIVSTRVRVG…NEIIREETNS (237 aa)) constitute a Phosphagen kinase C-terminal domain. Residues 114–118 (STRVR) and H177 contribute to the ATP site. A substrate-binding site is contributed by E217. R221 provides a ligand contact to ATP. C263 provides a ligand contact to substrate. Residues 272 to 276 (RASVH) and 300 to 305 (RGIHGE) each bind ATP. E305 provides a ligand contact to substrate.

The protein belongs to the ATP:guanido phosphotransferase family. Muscle (at protein level).

It catalyses the reaction L-arginine + ATP = N(omega)-phospho-L-arginine + ADP + H(+). Catalyzes the reversible transfer of high energy ATP gamma-phosphate group to L-arginine. The chain is Arginine kinase Oct f 2 from Amphioctopus fangsiao (Ocellated octopus).